Consider the following 205-residue polypeptide: CASP-like protein 3A1 (205 aa).

The Cytoplasmic portion of the chain corresponds to 1 to 39 (MGIGMDSSTMSGPLVAHSGILDGDYEKRPAVCKMQMRFD). A helical membrane pass occupies residues 40-60 (LANVGLRVLSLACSLVALVSM). Residues 61–89 (ASNQESGVVTVFGFKLPVYSKWSYSDSFE) lie on the Extracellular side of the membrane. A helical transmembrane segment spans residues 90-110 (FLVGASAAAAAHSLLQLLLCG). Over 111–125 (MKMVKRASTIPSRNH) the chain is Cytoplasmic. Residues 126–146 (AWLLFAGDQVFAYGMLAAASA) traverse the membrane as a helical segment. Topologically, residues 147-176 (AAGVTNLNRTGFRHSDLPNFCKPLHRFCDK) are extracellular. N-linked (GlcNAc...) asparagine glycosylation occurs at Asn-154. The chain crosses the membrane as a helical span at residues 177–197 (AAISIVFAFISSLILGGSAVL). At 198 to 205 (DVFWLSKN) the chain is on the cytoplasmic side.

The protein belongs to the Casparian strip membrane proteins (CASP) family. As to quaternary structure, homodimer and heterodimers.

Its subcellular location is the cell membrane. In Picea sitchensis (Sitka spruce), this protein is CASP-like protein 3A1.